A 177-amino-acid polypeptide reads, in one-letter code: Nucleoside triphosphate/diphosphate phosphatase (177 aa).

The Proton donor role is filled by arginine 23. Asparagine 87, aspartate 103, aspartate 105, aspartate 107, aspartate 120, and glutamate 123 together coordinate Mg(2+).

Belongs to the Ntdp family. The cofactor is Mg(2+).

It carries out the reaction a ribonucleoside 5'-triphosphate + H2O = a ribonucleoside 5'-diphosphate + phosphate + H(+). The catalysed reaction is a ribonucleoside 5'-diphosphate + H2O = a ribonucleoside 5'-phosphate + phosphate + H(+). Its function is as follows. Has nucleoside phosphatase activity towards nucleoside triphosphates and nucleoside diphosphates. This is Nucleoside triphosphate/diphosphate phosphatase from Enterococcus faecalis (strain ATCC 700802 / V583).